The sequence spans 430 residues: F-box/kelch-repeat protein At4g33290 (430 aa).

Residues 1–44 (MITDLPKDLIEEILSRVSMTSMRVVRLTCKSWNTLSNSESFKKM) form the F-box domain. 3 Kelch repeats span residues 161–207 (LLRF…CVQG), 312–363 (VPFI…IIEE), and 383–430 (LVRI…RPTR).

This Arabidopsis thaliana (Mouse-ear cress) protein is F-box/kelch-repeat protein At4g33290.